The chain runs to 818 residues: IQ and AAA domain-containing protein 1-like (818 aa).

An IQ domain is found at 206 to 235 (QGQAAVTIQKVWKGYLQRKRTQQDRRMEME). 2 disordered regions span residues 344–377 (QMQE…AKKG) and 458–482 (EERP…KDLT). Over residues 463–476 (RAPKKTPGKKTGKK) the composition is skewed to basic residues. An ATP-binding site is contributed by 567–574 (GPSGMGKK). A disordered region spans residues 795-818 (SMKHRMDQLEAEEAKLDKEKKKRK). The span at 798–818 (HRMDQLEAEEAKLDKEKKKRK) shows a compositional bias: basic and acidic residues.

It belongs to the AAA ATPase family.

The chain is IQ and AAA domain-containing protein 1-like (IQCA1L) from Homo sapiens (Human).